The following is a 128-amino-acid chain: Large ribosomal subunit protein bL12 (128 aa).

It belongs to the bacterial ribosomal protein bL12 family. Homodimer. Part of the ribosomal stalk of the 50S ribosomal subunit. Forms a multimeric L10(L12)X complex, where L10 forms an elongated spine to which 2 to 4 L12 dimers bind in a sequential fashion. Binds GTP-bound translation factors.

In terms of biological role, forms part of the ribosomal stalk which helps the ribosome interact with GTP-bound translation factors. Is thus essential for accurate translation. In Synechocystis sp. (strain ATCC 27184 / PCC 6803 / Kazusa), this protein is Large ribosomal subunit protein bL12.